A 230-amino-acid chain; its full sequence is Large ribosomal subunit protein uL1 (230 aa).

Belongs to the universal ribosomal protein uL1 family. Part of the 50S ribosomal subunit.

In terms of biological role, binds directly to 23S rRNA. The L1 stalk is quite mobile in the ribosome, and is involved in E site tRNA release. Protein L1 is also a translational repressor protein, it controls the translation of the L11 operon by binding to its mRNA. This Methylobacillus flagellatus (strain ATCC 51484 / DSM 6875 / VKM B-1610 / KT) protein is Large ribosomal subunit protein uL1.